We begin with the raw amino-acid sequence, 304 residues long: Undecaprenyl-diphosphatase (304 aa).

A run of 7 helical transmembrane segments spans residues 1 to 21, 54 to 74, 90 to 110, 114 to 134, 192 to 212, 225 to 245, and 253 to 273; these read MSLL…FLPV, TTLA…AAGL, LAWF…LFEE, ALGN…LLAA, FLLS…KTVP, LVGT…LLGW, and LFVV…WQGV.

The protein belongs to the UppP family.

The protein resides in the cell inner membrane. It carries out the reaction di-trans,octa-cis-undecaprenyl diphosphate + H2O = di-trans,octa-cis-undecaprenyl phosphate + phosphate + H(+). Its function is as follows. Catalyzes the dephosphorylation of undecaprenyl diphosphate (UPP). Confers resistance to bacitracin. This chain is Undecaprenyl-diphosphatase, found in Anaeromyxobacter sp. (strain Fw109-5).